Reading from the N-terminus, the 185-residue chain is uncharacterized protein (185 aa).

2 helical membrane passes run 1–19 (MLNIVLIIGLLAIFNTSSA) and 105–125 (AGFIAQCIIFLFVYTIVTMDV).

It localises to the membrane. This is an uncharacterized protein from Caenorhabditis elegans.